The sequence spans 243 residues: tRNA (guanine-N(1)-)-methyltransferase (243 aa).

S-adenosyl-L-methionine contacts are provided by residues glycine 111 and 130 to 135 (IGDYVL).

This sequence belongs to the RNA methyltransferase TrmD family. Homodimer.

It is found in the cytoplasm. It catalyses the reaction guanosine(37) in tRNA + S-adenosyl-L-methionine = N(1)-methylguanosine(37) in tRNA + S-adenosyl-L-homocysteine + H(+). Specifically methylates guanosine-37 in various tRNAs. This chain is tRNA (guanine-N(1)-)-methyltransferase, found in Acholeplasma laidlawii (strain PG-8A).